Consider the following 316-residue polypeptide: ATP synthase gamma chain (316 aa).

It belongs to the ATPase gamma chain family. In terms of assembly, F-type ATPases have 2 components, CF(1) - the catalytic core - and CF(0) - the membrane proton channel. CF(1) has five subunits: alpha(3), beta(3), gamma(1), delta(1), epsilon(1). CF(0) has three main subunits: a, b and c.

It is found in the cellular thylakoid membrane. Produces ATP from ADP in the presence of a proton gradient across the membrane. The gamma chain is believed to be important in regulating ATPase activity and the flow of protons through the CF(0) complex. In Prochlorococcus marinus (strain NATL2A), this protein is ATP synthase gamma chain.